The following is a 366-amino-acid chain: Chorismate synthase (366 aa).

2 residues coordinate NADP(+): Arg-48 and Arg-54. FMN is bound by residues Arg-125 to Ser-127, Asn-238 to Ala-239, Gly-278, Lys-293 to Ser-297, and Arg-319.

Belongs to the chorismate synthase family. Homotetramer. It depends on FMNH2 as a cofactor.

The catalysed reaction is 5-O-(1-carboxyvinyl)-3-phosphoshikimate = chorismate + phosphate. Its pathway is metabolic intermediate biosynthesis; chorismate biosynthesis; chorismate from D-erythrose 4-phosphate and phosphoenolpyruvate: step 7/7. In terms of biological role, catalyzes the anti-1,4-elimination of the C-3 phosphate and the C-6 proR hydrogen from 5-enolpyruvylshikimate-3-phosphate (EPSP) to yield chorismate, which is the branch point compound that serves as the starting substrate for the three terminal pathways of aromatic amino acid biosynthesis. This reaction introduces a second double bond into the aromatic ring system. This chain is Chorismate synthase, found in Neisseria meningitidis serogroup A / serotype 4A (strain DSM 15465 / Z2491).